Consider the following 196-residue polypeptide: Pyridoxine/pyridoxamine 5'-phosphate oxidase (196 aa).

FMN is bound by residues 46 to 51 (RNVLYK), 61 to 62 (FT), Arg-67, Lys-68, and Gln-90. Substrate is bound at residue Lys-51. 3 residues coordinate substrate: Tyr-108, Arg-112, and Ser-116. Residues 125-126 (QS) and Trp-169 contribute to the FMN site. Residue 175–177 (RLH) coordinates substrate. Residue Arg-179 participates in FMN binding.

It belongs to the pyridoxamine 5'-phosphate oxidase family. In terms of assembly, homodimer. FMN serves as cofactor.

It carries out the reaction pyridoxamine 5'-phosphate + O2 + H2O = pyridoxal 5'-phosphate + H2O2 + NH4(+). The enzyme catalyses pyridoxine 5'-phosphate + O2 = pyridoxal 5'-phosphate + H2O2. The protein operates within cofactor metabolism; pyridoxal 5'-phosphate salvage; pyridoxal 5'-phosphate from pyridoxamine 5'-phosphate: step 1/1. Its pathway is cofactor metabolism; pyridoxal 5'-phosphate salvage; pyridoxal 5'-phosphate from pyridoxine 5'-phosphate: step 1/1. In terms of biological role, catalyzes the oxidation of either pyridoxine 5'-phosphate (PNP) or pyridoxamine 5'-phosphate (PMP) into pyridoxal 5'-phosphate (PLP). The protein is Pyridoxine/pyridoxamine 5'-phosphate oxidase of Coxiella burnetii (strain RSA 493 / Nine Mile phase I).